A 559-amino-acid chain; its full sequence is 2-isopropylmalate synthase (559 aa).

The 275-residue stretch at 33–307 (PIWCSSDLRD…NPELDFSDID (275 aa)) folds into the Pyruvate carboxyltransferase domain. 4 residues coordinate Mg(2+): Asp42, His246, His248, and Asn282. The interval 439-559 (ANTPYALVSH…SLSEQQAKAA (121 aa)) is regulatory domain.

It belongs to the alpha-IPM synthase/homocitrate synthase family. LeuA type 2 subfamily. As to quaternary structure, homodimer. Mg(2+) is required as a cofactor.

It localises to the cytoplasm. It catalyses the reaction 3-methyl-2-oxobutanoate + acetyl-CoA + H2O = (2S)-2-isopropylmalate + CoA + H(+). It participates in amino-acid biosynthesis; L-leucine biosynthesis; L-leucine from 3-methyl-2-oxobutanoate: step 1/4. Functionally, catalyzes the condensation of the acetyl group of acetyl-CoA with 3-methyl-2-oxobutanoate (2-ketoisovalerate) to form 3-carboxy-3-hydroxy-4-methylpentanoate (2-isopropylmalate). In Pseudomonas fluorescens (strain ATCC BAA-477 / NRRL B-23932 / Pf-5), this protein is 2-isopropylmalate synthase.